The primary structure comprises 144 residues: Maximins 4/H3 type 3 (144 aa).

A signal peptide spans 1-18 (MNFKYIIAVSFFIASAYA). Residues 19 to 43 (RTEEKDVQSLSQRDVLEEESLREIR) constitute a propeptide that is removed on maturation. Residue Asn70 is modified to Asparagine amide. Positions 74–123 (TAEDHEVMKRLEAVMRDLDSLDHPEEASERQTRGFNQEEIANLFTKKEKR) are excised as a propeptide. Ile143 is modified (isoleucine amide).

The protein belongs to the bombinin family. As to expression, expressed by the skin glands.

It localises to the secreted. In terms of biological role, maximin-4 shows antibacterial activity against both Gram-positive and Gram-negative bacteria. It also shows antimicrobial activity against the fungus C.albicans, but not against A.flavus nor P.uticale. It has little hemolytic activity. It does not possess a significant cytotoxicity against tumor cell lines. It does not possess a significant anti-HIV activity. Maximin-H3 shows antibacterial activity against both Gram-positive and Gram-negative bacteria. It also shows antimicrobial activity against the fungus C.albicans. Shows strong hemolytic activity. This Bombina maxima (Giant fire-bellied toad) protein is Maximins 4/H3 type 3.